A 446-amino-acid chain; its full sequence is Probable glycine dehydrogenase (decarboxylating) subunit 1 (446 aa).

Belongs to the GcvP family. N-terminal subunit subfamily. As to quaternary structure, the glycine cleavage system is composed of four proteins: P, T, L and H. In this organism, the P 'protein' is a heterodimer of two subunits.

It carries out the reaction N(6)-[(R)-lipoyl]-L-lysyl-[glycine-cleavage complex H protein] + glycine + H(+) = N(6)-[(R)-S(8)-aminomethyldihydrolipoyl]-L-lysyl-[glycine-cleavage complex H protein] + CO2. The glycine cleavage system catalyzes the degradation of glycine. The P protein binds the alpha-amino group of glycine through its pyridoxal phosphate cofactor; CO(2) is released and the remaining methylamine moiety is then transferred to the lipoamide cofactor of the H protein. The sequence is that of Probable glycine dehydrogenase (decarboxylating) subunit 1 from Thermococcus onnurineus (strain NA1).